The chain runs to 706 residues: Zinc transporter foi (706 aa).

The first 21 residues, 1-21 (MARHIMAVCVVCLLCAHRLHC), serve as a signal peptide directing secretion. Residues 22-261 (QDHIESLLGP…EKDKDIFYVW (240 aa)) are Extracellular-facing. Positions 40 to 56 (QDQLNARVYTNLSPSSE) are enriched in polar residues. A disordered region spans residues 40–101 (QDQLNARVYT…HGPTSESRVP (62 aa)). Residues N74, N119, N176, N182, N196, and N207 are each glycosylated (N-linked (GlcNAc...) asparagine). The helical transmembrane segment at 262–282 (IYAFISVFACGILGLVGVAII) threads the bilayer. Topologically, residues 283-292 (PFMGSRYYKY) are cytoplasmic. Residues 293 to 313 (IIQYLVALAVGTMTGDALLHL) traverse the membrane as a helical segment. The Extracellular portion of the chain corresponds to 314–329 (LPHSLAGQDERGMIMK). The chain crosses the membrane as a helical span at residues 330-350 (GLGCLGGIIFFYVMEHALTMI). Topologically, residues 351–604 (SEWRKSVEKK…LIKAGMSVKS (254 aa)) are cytoplasmic. 3 positions are modified to phosphoserine: S376, S377, and S381. A helical transmembrane segment spans residues 605–625 (AVYYNLLTGVLSFIGMIFGIA). The Extracellular segment spans residues 626–631 (FGQSQD). A helical membrane pass occupies residues 632–652 (VAQWMFAVAAGLFIYIALVDM). The Cytoplasmic segment spans residues 653–665 (MPEISASHKSLGQ). The chain crosses the membrane as a helical span at residues 666–686 (FLLQILGMLSGVGIMLLIALY). Topologically, residues 687–706 (EGDLMSAFGTAGAASHQHAH) are extracellular.

This sequence belongs to the ZIP transporter (TC 2.A.5) family. In terms of processing, glycosylated. In terms of tissue distribution, maternal foi has almost completely disappeared by embryonic stage 3 except in the pole cells. In stage 6 embryos, expression is enriched in the invaginating mesoderm. In stage 9 embryos, high levels in the anterior and posterior midgut primordia. In stage 14 embryos, broad expression with low levels in the epidermis.

The protein localises to the cell membrane. Required for the normal migration of longitudinal and peripheral glial cells. During larval development, required for the migration of the subretinal glia into the eye disk. During embryonic development, also controls the migration of muscle cells toward their attachment sites. Required in the mesoderm for the correct morphogenesis of embryonic gonad and for tracheal branch fusion during tracheal development. Shg may be cooperating with foi to mediate a common mechanism for gonad and tracheal morphogenesis. Acts as a zinc transporter in both yeast and mammalian cells. The chain is Zinc transporter foi from Drosophila melanogaster (Fruit fly).